A 57-amino-acid chain; its full sequence is DNA-directed RNA polymerase subunit Rpo6 (57 aa).

Belongs to the archaeal Rpo6/eukaryotic RPB6 RNA polymerase subunit family. As to quaternary structure, part of the RNA polymerase complex.

Its subcellular location is the cytoplasm. It localises to the chromosome. The enzyme catalyses RNA(n) + a ribonucleoside 5'-triphosphate = RNA(n+1) + diphosphate. In terms of biological role, DNA-dependent RNA polymerase (RNAP) catalyzes the transcription of DNA into RNA using the four ribonucleoside triphosphates as substrates. The chain is DNA-directed RNA polymerase subunit Rpo6 from Thermococcus kodakarensis (strain ATCC BAA-918 / JCM 12380 / KOD1) (Pyrococcus kodakaraensis (strain KOD1)).